We begin with the raw amino-acid sequence, 341 residues long: Diguanylate cyclase DgcP (341 aa).

Residues 18–154 (SLESLVRQLL…LFAGLIAQYI (137 aa)) enclose the GAF domain. The region spanning 204 to 337 (HKIMIAFIDL…KQKTPFVAHP (134 aa)) is the GGDEF domain. Aspartate 212 serves as a coordination point for Mg(2+). 3 residues coordinate substrate: asparagine 220, histidine 225, and aspartate 229. Aspartate 255 contacts Mg(2+). Residue aspartate 255 is the Proton acceptor of the active site.

Homodimer. It depends on Mg(2+) as a cofactor.

The catalysed reaction is 2 GTP = 3',3'-c-di-GMP + 2 diphosphate. The protein operates within purine metabolism; 3',5'-cyclic di-GMP biosynthesis. Its function is as follows. Catalyzes the synthesis of cyclic-di-GMP (c-di-GMP) via the condensation of 2 GTP molecules. Cyclic-di-GMP is a second messenger which controls cell surface-associated traits in bacteria. This Escherichia coli (strain K12) protein is Diguanylate cyclase DgcP.